A 469-amino-acid polypeptide reads, in one-letter code: Protein nucleotidyltransferase YdiU (469 aa).

8 residues coordinate ATP: Gly80, Gly82, Arg83, Lys103, Asp115, Gly116, Arg166, and Arg173. Asp243 acts as the Proton acceptor in catalysis. Residues Asn244 and Asp253 each coordinate Mg(2+). Asp253 is a binding site for ATP.

It belongs to the SELO family. The cofactor is Mg(2+). It depends on Mn(2+) as a cofactor.

It catalyses the reaction L-seryl-[protein] + ATP = 3-O-(5'-adenylyl)-L-seryl-[protein] + diphosphate. The catalysed reaction is L-threonyl-[protein] + ATP = 3-O-(5'-adenylyl)-L-threonyl-[protein] + diphosphate. The enzyme catalyses L-tyrosyl-[protein] + ATP = O-(5'-adenylyl)-L-tyrosyl-[protein] + diphosphate. It carries out the reaction L-histidyl-[protein] + UTP = N(tele)-(5'-uridylyl)-L-histidyl-[protein] + diphosphate. It catalyses the reaction L-seryl-[protein] + UTP = O-(5'-uridylyl)-L-seryl-[protein] + diphosphate. The catalysed reaction is L-tyrosyl-[protein] + UTP = O-(5'-uridylyl)-L-tyrosyl-[protein] + diphosphate. Functionally, nucleotidyltransferase involved in the post-translational modification of proteins. It can catalyze the addition of adenosine monophosphate (AMP) or uridine monophosphate (UMP) to a protein, resulting in modifications known as AMPylation and UMPylation. The sequence is that of Protein nucleotidyltransferase YdiU from Pseudoalteromonas translucida (strain TAC 125).